Here is a 599-residue protein sequence, read N- to C-terminus: UV-damage endonuclease (599 aa).

Disordered stretches follow at residues T89 to S224 and I561 to K599. Residues P97–K115 are compositionally biased toward basic residues. Basic and acidic residues predominate over residues K116–E127. Residues H137–K146 show a composition bias toward basic residues.

The protein belongs to the uve1/UvsE family.

Its function is as follows. Endonuclease for the repair of UV-irradiated DNA. Involved in the excision of cyclobutane pyrimidine dimers (CPD) and 6-4 pyrimidine pyrimidones (6-4PP) which forms the UV damage repair (UVDR) pathway. Also functions in oxidative damage repair in vivo. Provides back-up AP endonuclease activity to apn2 together with apn1. In Schizosaccharomyces pombe (strain 972 / ATCC 24843) (Fission yeast), this protein is UV-damage endonuclease (uve1).